The sequence spans 429 residues: Ribosomal RNA small subunit methyltransferase B (429 aa).

S-adenosyl-L-methionine contacts are provided by residues 254–260 (CAGPGGK), aspartate 277, aspartate 303, and aspartate 322. The active-site Nucleophile is cysteine 375.

Belongs to the class I-like SAM-binding methyltransferase superfamily. RsmB/NOP family.

The protein localises to the cytoplasm. The catalysed reaction is cytidine(967) in 16S rRNA + S-adenosyl-L-methionine = 5-methylcytidine(967) in 16S rRNA + S-adenosyl-L-homocysteine + H(+). In terms of biological role, specifically methylates the cytosine at position 967 (m5C967) of 16S rRNA. The polypeptide is Ribosomal RNA small subunit methyltransferase B (Escherichia coli O6:K15:H31 (strain 536 / UPEC)).